We begin with the raw amino-acid sequence, 330 residues long: Inactive hydroxysteroid dehydrogenase-like protein 1 (330 aa).

Position 2 is an N-acetylalanine (Ala2). Positions 2-82 (AAVDSFYLLY…SGATDGIGKA (81 aa)) are required for mitochondria translocation. NADP(+) contacts are provided by residues 74 to 80 (GATDGIG), Asp125, and Lys222.

Belongs to the short-chain dehydrogenases/reductases (SDR) family. 17-beta-HSD 3 subfamily. In terms of assembly, interacts with STYXL1.

The protein localises to the mitochondrion. This Rattus norvegicus (Rat) protein is Inactive hydroxysteroid dehydrogenase-like protein 1 (Hsdl1).